The chain runs to 320 residues: Fructose-1,6-bisphosphatase class 1 (320 aa).

Mg(2+) is bound by residues E93, D114, L116, and D117. Substrate is bound by residues 117–120, Y225, and K256; that span reads DGSS. Mg(2+) is bound at residue E262.

It belongs to the FBPase class 1 family. Homotetramer. Mg(2+) serves as cofactor.

Its subcellular location is the cytoplasm. It carries out the reaction beta-D-fructose 1,6-bisphosphate + H2O = beta-D-fructose 6-phosphate + phosphate. The protein operates within carbohydrate biosynthesis; gluconeogenesis. In Syntrophotalea carbinolica (strain DSM 2380 / NBRC 103641 / GraBd1) (Pelobacter carbinolicus), this protein is Fructose-1,6-bisphosphatase class 1.